The sequence spans 487 residues: DNA polymerase delta small subunit (487 aa).

Residue Met1 is modified to N-acetylmethionine. Phosphoserine is present on Ser20.

It belongs to the DNA polymerase delta/II small subunit family. In terms of assembly, DNA polymerase delta is a heterotrimer of POL3, POL32 and HYS2.

Its subcellular location is the nucleus. It catalyses the reaction DNA(n) + a 2'-deoxyribonucleoside 5'-triphosphate = DNA(n+1) + diphosphate. In terms of biological role, DNA polymerase delta (DNA polymerase III) participates in chromosomal DNA replication. It is required during synthesis of the leading and lagging DNA strands at the replication fork and binds at/or near replication origins and moves along DNA with the replication fork. It has 3'-5' proofreading exonuclease activity that correct errors arising during DNA replication. It is also involved in DNA synthesis during DNA repair. This Saccharomyces cerevisiae (strain ATCC 204508 / S288c) (Baker's yeast) protein is DNA polymerase delta small subunit (POL31).